A 1133-amino-acid chain; its full sequence is Eukaryotic translation initiation factor 3 subunit A (1133 aa).

Residues 317 to 498 (IQRMTSHVLI…HCVHFGTDLS (182 aa)) form the PCI domain. 2 coiled-coil regions span residues 573–700 (KKIE…YFER) and 784–886 (EEER…EADS). The span at 810 to 893 (KEEERRRAEE…ADSWRDRRGG (84 aa)) shows a compositional bias: basic and acidic residues. The tract at residues 810–1133 (KEEERRRAEE…DGWTDVKHHR (324 aa)) is disordered. Positions 895 to 909 (APAAAAQPNPAAQEA) are enriched in low complexity. Composition is skewed to basic and acidic residues over residues 920–944 (GAREPRGEDAPKKDGVYQPRFRDVR), 954–1081 (VERR…DSAW), and 1097–1117 (TRQDQAKPKDDRREERPKEAR).

This sequence belongs to the eIF-3 subunit A family. Component of the eukaryotic translation initiation factor 3 (eIF-3) complex.

It localises to the cytoplasm. In terms of biological role, RNA-binding component of the eukaryotic translation initiation factor 3 (eIF-3) complex, which is involved in protein synthesis of a specialized repertoire of mRNAs and, together with other initiation factors, stimulates binding of mRNA and methionyl-tRNAi to the 40S ribosome. The eIF-3 complex specifically targets and initiates translation of a subset of mRNAs involved in cell proliferation. The polypeptide is Eukaryotic translation initiation factor 3 subunit A (Aedes aegypti (Yellowfever mosquito)).